The chain runs to 273 residues: Testis-specific serine/threonine-protein kinase 6 (273 aa).

The Protein kinase domain occupies 12 to 267 (YKLGRTIGEG…AGQVARNGWL (256 aa)). Residues 18-26 (IGEGSYSKV) and Lys41 each bind ATP. The active-site Proton acceptor is Asp135.

This sequence belongs to the protein kinase superfamily. CAMK Ser/Thr protein kinase family. Microtubule inner protein component of sperm flagellar doublet microtubules. Interacts with HSP90; this interaction stabilizes and activates TSSK6. Interacts with the heat shock proteins HSPCB, HSPA8 and HSPA1A. These interactions appear to be required for TSSK6 kinase activity. Interacts with TSACC; this interaction is direct and recruits TSACC to HSP90, which is essential for kinase activity. Mg(2+) serves as cofactor. In terms of processing, autophosphorylated. Post-translationally, ubiquitinated; HSP90 activity negatively regulates ubiquitination and degradation. Expressed in the testis, localized to the heads of elongating spermatids.

It is found in the cytoplasm. The protein resides in the cytoskeleton. It localises to the flagellum axoneme. Its subcellular location is the nucleus. It carries out the reaction L-seryl-[protein] + ATP = O-phospho-L-seryl-[protein] + ADP + H(+). The catalysed reaction is L-threonyl-[protein] + ATP = O-phospho-L-threonyl-[protein] + ADP + H(+). Its function is as follows. Serine/threonine-protein kinase component of the sperm flagellar doublet microtubules. May act as a regulator of sperm motility by mediating phosphorylation of sperm doublet microtubule proteins. Plays a role in DNA condensation during postmeiotic chromatin remodeling and histone-to-protamine transition during spermatogenesis. The sequence is that of Testis-specific serine/threonine-protein kinase 6 from Mus musculus (Mouse).